The sequence spans 520 residues: MANKKSTVLMILDGWGYREETSSNAIHQANTPVLDNLKAKYPNMLIDTSGMAVGLPEGQMGNSEVGHVNLGAGRVVYQDFTRITKAISDGDFIENPTLCHAVDTATSNNKAVHIFGLLSPGGVHSHEEHIFAMMELAKKRGAQKVYLHAFLDGRDTPPRSAQASLEKAQQKFSKLFTETDTGEGQIASVIGRYYAMDRDQRWDRVEAAYNLMVNGEGLHQYNSALDALAAAYERNENDEFVGASAITSPSGKAIKVNDGDALIFMNFRADRARQFSRCFTDTNFNGFERKRIPAISNFVMLTQYAADIDAPSAFAPTPLTNVMGEWLAKHNKTQLRISETEKYAHVTFFFSGGKEDMFTGEERILVPSPDVATYDLQPEMNSTLLTDKLVGAIESGKYDFIVCNYPNGDMVGHTGSFDAAVKACEAVDTCVGRVVKAAQDNGGECLITADHGNAEQMQDPVSGQAHTAHTCEPVPLIYVGRNASPAASGTLSDISPSVLHLMGMEQPQEMTGSVLMQLIK.

D13 and S63 together coordinate Mn(2+). Residue S63 is the Phosphoserine intermediate of the active site. Substrate contacts are provided by residues H124, R154 to D155, R192, R198, R268 to R271, and K342. Mn(2+) contacts are provided by D409, H413, D450, H451, and H469.

The protein belongs to the BPG-independent phosphoglycerate mutase family. In terms of assembly, monomer. Mn(2+) is required as a cofactor.

The catalysed reaction is (2R)-2-phosphoglycerate = (2R)-3-phosphoglycerate. It participates in carbohydrate degradation; glycolysis; pyruvate from D-glyceraldehyde 3-phosphate: step 3/5. Functionally, catalyzes the interconversion of 2-phosphoglycerate and 3-phosphoglycerate. This chain is 2,3-bisphosphoglycerate-independent phosphoglycerate mutase, found in Colwellia psychrerythraea (strain 34H / ATCC BAA-681) (Vibrio psychroerythus).